A 348-amino-acid chain; its full sequence is Fructose-1,6-bisphosphatase class 1 (348 aa).

Mg(2+) is bound by residues E107, D129, I131, and D132. Substrate-binding positions include 132–135 (DGSS), N224, Y252, and K282. E288 is a Mg(2+) binding site.

It belongs to the FBPase class 1 family. As to quaternary structure, homotetramer. Mg(2+) is required as a cofactor.

Its subcellular location is the cytoplasm. The enzyme catalyses beta-D-fructose 1,6-bisphosphate + H2O = beta-D-fructose 6-phosphate + phosphate. It functions in the pathway carbohydrate biosynthesis; Calvin cycle. In Microcystis aeruginosa (strain NIES-843 / IAM M-2473), this protein is Fructose-1,6-bisphosphatase class 1.